A 148-amino-acid chain; its full sequence is MTITQFKIQKLENFFGSLPKYATEHSAGMDLIAANKQPIIIKIGEIQLIPTGIAIALPDLFEAQIRPRSGLAVKHGITVANSPGTIDSDYRGEIKVILINLGKEDFIIEKGMRIAQMIISKYERILWKESNTLEETVRGSGGFGSTGV.

Substrate contacts are provided by residues 68–70, Asn-81, 85–87, and Lys-95; these read RSG and TID.

The protein belongs to the dUTPase family. The cofactor is Mg(2+).

The catalysed reaction is dUTP + H2O = dUMP + diphosphate + H(+). It functions in the pathway pyrimidine metabolism; dUMP biosynthesis; dUMP from dCTP (dUTP route): step 2/2. Its function is as follows. This enzyme is involved in nucleotide metabolism: it produces dUMP, the immediate precursor of thymidine nucleotides and it decreases the intracellular concentration of dUTP so that uracil cannot be incorporated into DNA. The sequence is that of Deoxyuridine 5'-triphosphate nucleotidohydrolase from Rickettsia canadensis (strain McKiel).